Reading from the N-terminus, the 443-residue chain is Ribosomal protein uS12 methylthiotransferase RimO (443 aa).

The region spanning 6-116 (PRVGMISLGC…VVNAVHDVVP (111 aa)) is the MTTase N-terminal domain. [4Fe-4S] cluster is bound by residues cysteine 15, cysteine 51, cysteine 80, cysteine 149, cysteine 153, and cysteine 156. Residues 135–373 (LTPRHYAYLK…MAHQQAISAA (239 aa)) form the Radical SAM core domain. Positions 376–443 (QMKIGKEIEV…DEYDLWAEML (68 aa)) constitute a TRAM domain.

Belongs to the methylthiotransferase family. RimO subfamily. [4Fe-4S] cluster serves as cofactor.

It is found in the cytoplasm. It catalyses the reaction L-aspartate(89)-[ribosomal protein uS12]-hydrogen + (sulfur carrier)-SH + AH2 + 2 S-adenosyl-L-methionine = 3-methylsulfanyl-L-aspartate(89)-[ribosomal protein uS12]-hydrogen + (sulfur carrier)-H + 5'-deoxyadenosine + L-methionine + A + S-adenosyl-L-homocysteine + 2 H(+). Functionally, catalyzes the methylthiolation of an aspartic acid residue of ribosomal protein uS12. The polypeptide is Ribosomal protein uS12 methylthiotransferase RimO (Pseudomonas syringae pv. tomato (strain ATCC BAA-871 / DC3000)).